The sequence spans 185 residues: Threonylcarbamoyl-AMP synthase (185 aa).

The 182-residue stretch at 4 to 185 folds into the YrdC-like domain; the sequence is SWRVQQAARE…LATGNIVRPA (182 aa).

The protein belongs to the SUA5 family. TsaC subfamily.

Its subcellular location is the cytoplasm. The enzyme catalyses L-threonine + hydrogencarbonate + ATP = L-threonylcarbamoyladenylate + diphosphate + H2O. In terms of biological role, required for the formation of a threonylcarbamoyl group on adenosine at position 37 (t(6)A37) in tRNAs that read codons beginning with adenine. Catalyzes the conversion of L-threonine, HCO(3)(-)/CO(2) and ATP to give threonylcarbamoyl-AMP (TC-AMP) as the acyladenylate intermediate, with the release of diphosphate. The sequence is that of Threonylcarbamoyl-AMP synthase from Pseudomonas fluorescens (strain Pf0-1).